The sequence spans 602 residues: MIRQCLSRRAAYPCYRIVAGGTEPTGCLYPQSCRISRRGRDWSSTSRRAIDTQTSGASNGADYVPLRQQLKEQARAKRAAKRKGEVSPPEHEDWELTVGIEIHAQLDTDTKLFSRASAAIDDVPNSNVALFDVALPGSQPLFQPATLIPALRAAIALNCDVQRVSRFDRKHYFYQDQPAGYQITQYYEPYAKNGSIWLGSHDGIAKEDGVGVEIGIKQIQMEQDTAKSQELPSSTYLLDFNRVSRPLIEIITLPQIHSPATAAACVRKIQTILQSVGAVTTGMEMGGLRADVNVSVRKRSEGVGDHQYHGVTGLGQRTEIKNLSSFKAVEDAIIAERDRQIAVLRAGGAIEGETRGWTLGSTETRKLRGKEGEVDYRYMPDPDLGPVIIGYDVLCELKAKLPVLPDALLHNLVQDPKYGLSIDDAKTLIELDDGDRLDYYKDAVDILVTLQKDLSDDFSGGKVVGNWVLHELGGLLTKSNLHWDSERVPAQSLAEIINLLSRNKITGSTAKSLFAMVFDGDKRSIGQIVEDENLLLQSLSREEYIALAEEVMRQNPKMVMEICEKRQLGKIGWLVGQIKRIGDRNRVEAQKAEEILRELILK.

It belongs to the GatB/GatE family. GatB subfamily. As to quaternary structure, subunit of the heterotrimeric GatCAB amidotransferase (AdT) complex, composed of A, B and C subunits.

It is found in the mitochondrion. It carries out the reaction L-glutamyl-tRNA(Gln) + L-glutamine + ATP + H2O = L-glutaminyl-tRNA(Gln) + L-glutamate + ADP + phosphate + H(+). Allows the formation of correctly charged Gln-tRNA(Gln) through the transamidation of misacylated Glu-tRNA(Gln) in the mitochondria. The reaction takes place in the presence of glutamine and ATP through an activated gamma-phospho-Glu-tRNA(Gln). The polypeptide is Glutamyl-tRNA(Gln) amidotransferase subunit B, mitochondrial (Paracoccidioides lutzii (strain ATCC MYA-826 / Pb01) (Paracoccidioides brasiliensis)).